Consider the following 185-residue polypeptide: Elongation factor P (185 aa).

The protein belongs to the elongation factor P family.

The protein resides in the cytoplasm. It participates in protein biosynthesis; polypeptide chain elongation. In terms of biological role, involved in peptide bond synthesis. Stimulates efficient translation and peptide-bond synthesis on native or reconstituted 70S ribosomes in vitro. Probably functions indirectly by altering the affinity of the ribosome for aminoacyl-tRNA, thus increasing their reactivity as acceptors for peptidyl transferase. This chain is Elongation factor P, found in Bacillus licheniformis (strain ATCC 14580 / DSM 13 / JCM 2505 / CCUG 7422 / NBRC 12200 / NCIMB 9375 / NCTC 10341 / NRRL NRS-1264 / Gibson 46).